The following is a 444-amino-acid chain: Trigger factor (444 aa).

One can recognise a PPIase FKBP-type domain in the interval 166-251 (GDQVVIDFKG…VKAVKAPKAA (86 aa)).

It belongs to the FKBP-type PPIase family. Tig subfamily.

It is found in the cytoplasm. The enzyme catalyses [protein]-peptidylproline (omega=180) = [protein]-peptidylproline (omega=0). In terms of biological role, involved in protein export. Acts as a chaperone by maintaining the newly synthesized protein in an open conformation. Functions as a peptidyl-prolyl cis-trans isomerase. This chain is Trigger factor, found in Cereibacter sphaeroides (strain ATCC 17029 / ATH 2.4.9) (Rhodobacter sphaeroides).